The primary structure comprises 520 residues: DDB1- and CUL4-associated factor 17 (520 aa).

2 helical membrane passes run Val186–Ile206 and Gly222–Ala242.

As to quaternary structure, interacts with DDB1, CUL4A and CUL4B. In terms of tissue distribution, ubiquitously expressed.

It localises to the membrane. The protein localises to the nucleus. It is found in the nucleolus. The protein operates within protein modification; protein ubiquitination. May function as a substrate receptor for CUL4-DDB1 E3 ubiquitin-protein ligase complex. This is DDB1- and CUL4-associated factor 17 (DCAF17) from Homo sapiens (Human).